A 507-amino-acid chain; its full sequence is Phosphoprotein (507 aa).

Residues 1-48 (MAEEQARHVKNGLECIRALKAEPIGSLAIEEAMAAWSEISDNPGQERA) are interaction with N0. 5 disordered regions span residues 40–100 (SDNP…PRNL), 134–163 (GLDGDSTLSGGDNESENSDVDIGEPDTEGY), 201–232 (NNFPKLGKTLNVPPPPDPGRASTSGTPIKKGT), 250–273 (GATQCARKSPSEPSGPGAPAGNVP), and 285–309 (WTPESGTTISPRSQNNEEGGDHYDD). Serine 86 carries the phosphoserine modification. The span at 134-145 (GLDGDSTLSGGD) shows a compositional bias: low complexity. Residues 146 to 160 (NESENSDVDIGEPDT) are compositionally biased toward acidic residues. At serine 151 the chain carries Phosphoserine. Residues 260 to 270 (SEPSGPGAPAG) show a composition bias toward low complexity. The segment covering 286-301 (TPESGTTISPRSQNNE) has biased composition (polar residues). The tract at residues 304–376 (GDHYDDELFS…LSSIMIAIPG (73 aa)) is multimerization. Aspartate 314 serves as a coordination point for Ca(2+). Interaction with the L polymerase regions lie at residues 361–377 (STLEGHLSSIMIAIPGL) and 396–410 (PIIGRDSGRALAEVL). The x domain (XD) stretch occupies residues 457 to 507 (GPASRSVIRSIIKSSRLEEDRKRYLMTLLDDIKGANDLAKFHQMLMKIIMK). The interaction with the nucleocapsid (N-RNA) stretch occupies residues 459–507 (ASRSVIRSIIKSSRLEEDRKRYLMTLLDDIKGANDLAKFHQMLMKIIMK).

The protein belongs to the morbillivirus P protein family. In terms of assembly, homotetramer. Interacts (via multimerization domain and XD domain) with polymerase L; this interaction forms the polymerase L-P complex. Interacts (via N-terminus) with N0 (via Ncore); this interaction allows P to chaperon N0 to avoid N polymerization and non-specific RNA binding before encapsidation. Interacts (via C-terminus) with N-RNA template (via Ntail); this interaction maintains the P/L complex anchored to the nucleocapsid template during the sequential transcription. Interacts (via C-terminus) with protein C this interaction allows C to associate with the ribonucleocapsid. Phosphorylation on serines by host CK2 is necessary for the formation of viral factories.

Essential cofactor of the RNA polymerase L that plays a central role in the transcription and replication by forming the polymerase complex with RNA polymerase L and recruiting L to the genomic N-RNA template for RNA synthesis. Also plays a central role in the encapsidation of nascent RNA chains by forming the encapsidation complex with the nucleocapsid protein N (N-P complex). Acts as a chaperone for newly synthesized free N protein, so-called N0, allowing encapsidation of nascent RNA chains during replication. The nucleoprotein protein N prevents excessive phosphorylation of P, which leads to down-regulation of viral transcription/ replication. Participates, together with N, in the formation of viral factories (viroplasms), which are large inclusions in the host cytoplasm where replication takes place. The sequence is that of Phosphoprotein (P/V) from Measles virus (strain Edmonston B) (MeV).